Here is a 701-residue protein sequence, read N- to C-terminus: Pseudouridylate synthase PUS7L (701 aa).

Position 79 is a phosphoserine (S79). D339 functions as the Nucleophile in the catalytic mechanism. One can recognise a TRUD domain in the interval G424–H647.

This sequence belongs to the pseudouridine synthase TruD family.

It catalyses the reaction a uridine in mRNA = a pseudouridine in mRNA. Its function is as follows. Pseudouridine synthase that catalyzes pseudouridylation of mRNAs. In Homo sapiens (Human), this protein is Pseudouridylate synthase PUS7L.